We begin with the raw amino-acid sequence, 456 residues long: Equilibrative nucleoside transporter 2 (456 aa).

The Cytoplasmic portion of the chain corresponds to 1 to 12 (MAHGNAPRDSYH). A helical transmembrane segment spans residues 13–29 (LVGISFFILGLGTLLPW). The Extracellular segment spans residues 30–68 (NFFITAIPYFQGRLAGTNSSAETPSTNHTSPTDTFNFNN). 2 N-linked (GlcNAc...) asparagine glycosylation sites follow: Asn47 and Asn56. Residues 69–93 (WVTLLSQLPLLLFTLLNSFLYQCIP) form a helical membrane-spanning segment. The Cytoplasmic portion of the chain corresponds to 94-97 (ESVR). The chain crosses the membrane as a helical span at residues 98-116 (ILGSLLAILLLFALTAALV). Topologically, residues 117 to 124 (KVDLSPGL) are extracellular. Residues 125–143 (FFSITMASVWFINSFCAVL) form a helical membrane-spanning segment. Residues 144–160 (QGSLFGQLGTMPSTYST) lie on the Cytoplasmic side of the membrane. The chain crosses the membrane as a helical span at residues 161–185 (LFLSGQGLAGIFAALAMLTSLASGV). Over 186 to 192 (DPQTSAL) the chain is Extracellular. The chain crosses the membrane as a helical span at residues 193-213 (GYFITPCVGILLSIICYLSLP). At 214-291 (HLKFARYYLT…VFVVFRKIWL (78 aa)) the chain is on the cytoplasmic side. Ser251 carries the phosphoserine modification. Residues 292–311 (TALCLVLVFTVTLSVFPAIT) form a helical membrane-spanning segment. Residues 312–323 (AMVTTSSNSPGK) lie on the Extracellular side of the membrane. The chain crosses the membrane as a helical span at residues 324–342 (WSQFFNPICCFLLFNVMDW). Residues 343 to 359 (LGRSLTSYFLWPDEDSQ) are Cytoplasmic-facing. The helical transmembrane segment at 360-378 (LLPLLVCLRFLFVPLFMLC) threads the bilayer. At 379–393 (HVPQRARLPIIFWQD) the chain is on the extracellular side. The chain crosses the membrane as a helical span at residues 394 to 413 (AYFITFMLLFAISNGYFVSL). Topologically, residues 414-431 (TMCLAPRQVLPHEREVAG) are cytoplasmic. The chain crosses the membrane as a helical span at residues 432 to 452 (ALMTFFLALGLSCGASLSFLF). At 453–456 (KALL) the chain is on the extracellular side.

This sequence belongs to the SLC29A/ENT transporter (TC 2.A.57) family. Expressed in squeletal muscles. Expressed in testis at the blood-brain-barrier.

It localises to the apical cell membrane. The protein localises to the basolateral cell membrane. The enzyme catalyses uridine(out) = uridine(in). The catalysed reaction is inosine(in) = inosine(out). It carries out the reaction adenosine(in) = adenosine(out). It catalyses the reaction thymidine(in) = thymidine(out). The enzyme catalyses hypoxanthine(out) = hypoxanthine(in). The catalysed reaction is adenine(out) = adenine(in). It carries out the reaction cytidine(in) = cytidine(out). It catalyses the reaction thymine(out) = thymine(in). The enzyme catalyses uracil(in) = uracil(out). The catalysed reaction is guanine(out) = guanine(in). It carries out the reaction guanosine(in) = guanosine(out). In terms of biological role, bidirectional uniporter involved in the facilitative transport of nucleosides and nucleobases, and contributes to maintaining their cellular homeostasis. Functions as a Na(+)-independent, passive transporter. Involved in the transport of nucleosides such as inosine, adenosine, uridine, thymidine, cytidine and guanosine. Also able to transport purine nucleobases (hypoxanthine, adenine, guanine) and pyrimidine nucleobases (thymine, uracil). Involved in nucleoside transport at basolateral membrane of kidney cells, allowing liver absorption of nucleoside metabolites. Mediates apical nucleoside uptake into Sertoli cells, thereby regulating the transport of nucleosides in testis across the blood-testis-barrier. Mediates both the influx and efflux of hypoxanthine in skeletal muscle microvascular endothelial cells to control the amount of intracellular hypoxanthine available for xanthine oxidase-mediated ROS production. The sequence is that of Equilibrative nucleoside transporter 2 from Rattus norvegicus (Rat).